A 582-amino-acid chain; its full sequence is Protein NUCLEAR FUSION DEFECTIVE 4 (582 aa).

Residues 1–20 (MRPRIRDVSDKLRPNRASFD) are disordered. Helical transmembrane passes span 46–66 (VLVA…FSAY), 100–120 (IALG…MGFV), 132–152 (IITL…LSIC), 172–192 (LALS…SLAF), 202–222 (LYLL…LYPV), 243–263 (VFTI…LSSS), 270–290 (LNFI…LLVY), and 358–378 (LEFW…LVYS). A glycan (N-linked (GlcNAc...) asparagine) is linked at N391. 5 helical membrane-spanning segments follow: residues 395-412 (LVTI…LSAA), 425-445 (TGWF…LAVS), 458-478 (LIGL…SDLF), 489-509 (ILIT…ASIY), and 536-556 (TFVF…SLYI).

The protein localises to the membrane. Functionally, required for karyogamy during female gametophyte development, when the two polar nuclei fuse to form the diploid central cell nucleus. The sequence is that of Protein NUCLEAR FUSION DEFECTIVE 4 from Arabidopsis thaliana (Mouse-ear cress).